Reading from the N-terminus, the 180-residue chain is Shikimate kinase (180 aa).

Residue 14-19 (GAGKSC) participates in ATP binding. Serine 18 is a Mg(2+) binding site. The substrate site is built by aspartate 36, arginine 60, and glycine 82. Position 120 (arginine 120) interacts with ATP. Arginine 139 lines the substrate pocket.

It belongs to the shikimate kinase family. In terms of assembly, monomer. Mg(2+) serves as cofactor.

The protein resides in the cytoplasm. It catalyses the reaction shikimate + ATP = 3-phosphoshikimate + ADP + H(+). Its pathway is metabolic intermediate biosynthesis; chorismate biosynthesis; chorismate from D-erythrose 4-phosphate and phosphoenolpyruvate: step 5/7. Its function is as follows. Catalyzes the specific phosphorylation of the 3-hydroxyl group of shikimic acid using ATP as a cosubstrate. In Xanthomonas campestris pv. campestris (strain 8004), this protein is Shikimate kinase.